The chain runs to 139 residues: Protein GOS9 (139 aa).

The region spanning 5–139 (LVKIGTWGGN…VDSIGVYVHI (135 aa)) is the Jacalin-type lectin domain.

Expressed mainly in roots.

In Oryza sativa subsp. indica (Rice), this protein is Protein GOS9 (GOS9).